A 471-amino-acid polypeptide reads, in one-letter code: Sulfate adenylyltransferase subunit 1 (471 aa).

The tr-type G domain maps to 24–240 (KSLLRFLTCG…ESADVERELE (217 aa)). Residues 33-40 (GSVDDGKS) are G1. 33 to 40 (GSVDDGKS) contacts GTP. Residues 91 to 95 (GITID) are G2. The segment at 112 to 115 (DTPG) is G3. GTP-binding positions include 112 to 116 (DTPGH) and 167 to 170 (NKMD). The tract at residues 167-170 (NKMD) is G4. Residues 204-206 (SAL) are G5.

It belongs to the TRAFAC class translation factor GTPase superfamily. Classic translation factor GTPase family. CysN/NodQ subfamily. As to quaternary structure, heterodimer composed of CysD, the smaller subunit, and CysN.

It catalyses the reaction sulfate + ATP + H(+) = adenosine 5'-phosphosulfate + diphosphate. It functions in the pathway sulfur metabolism; hydrogen sulfide biosynthesis; sulfite from sulfate: step 1/3. Its function is as follows. With CysD forms the ATP sulfurylase (ATPS) that catalyzes the adenylation of sulfate producing adenosine 5'-phosphosulfate (APS) and diphosphate, the first enzymatic step in sulfur assimilation pathway. APS synthesis involves the formation of a high-energy phosphoric-sulfuric acid anhydride bond driven by GTP hydrolysis by CysN coupled to ATP hydrolysis by CysD. The protein is Sulfate adenylyltransferase subunit 1 of Aeromonas salmonicida (strain A449).